A 197-amino-acid chain; its full sequence is Phosphoheptose isomerase (197 aa).

One can recognise an SIS domain in the interval 36–197 (LFAALANNGR…IDALLLGDTE (162 aa)). Residue 51–53 (NGG) participates in substrate binding. Histidine 60 and glutamate 64 together coordinate Zn(2+). Substrate is bound by residues glutamate 64, 93–94 (ND), 119–121 (STS), serine 124, and glutamine 174. 2 residues coordinate Zn(2+): glutamine 174 and histidine 182.

This sequence belongs to the SIS family. GmhA subfamily. As to quaternary structure, homotetramer. Zn(2+) serves as cofactor.

It is found in the cytoplasm. The catalysed reaction is 2 D-sedoheptulose 7-phosphate = D-glycero-alpha-D-manno-heptose 7-phosphate + D-glycero-beta-D-manno-heptose 7-phosphate. It participates in carbohydrate biosynthesis; D-glycero-D-manno-heptose 7-phosphate biosynthesis; D-glycero-alpha-D-manno-heptose 7-phosphate and D-glycero-beta-D-manno-heptose 7-phosphate from sedoheptulose 7-phosphate: step 1/1. Catalyzes the isomerization of sedoheptulose 7-phosphate in D-glycero-D-manno-heptose 7-phosphate. The sequence is that of Phosphoheptose isomerase from Bordetella avium (strain 197N).